Reading from the N-terminus, the 747-residue chain is uncharacterized protein (747 aa).

A helical transmembrane segment spans residues 7–27 (FFLKVISVIAPIVIIPTILAN).

It localises to the membrane. This is an uncharacterized protein from Ureaplasma parvum serovar 3 (strain ATCC 700970).